Here is a 345-residue protein sequence, read N- to C-terminus: MDLIKEFERLIPEIKKNLEQASSLEHIEQIRVAFLGRKGQLAALMSKIPSVDTSLRPVVGETANSVKNQLTQLIHEYKTQLDFLTTTNRIQNFDAGLPGKRPWYGTLHPITIVLEEICSVFTSLGYTIATGPEVETEYHNFEALGIPSEHPARDMQDTFYISDSILLRTHTSSIQIRTMLKKQPPIAIIAPGRVYRRDSDVTHTPMFHQIEGLVVDKNISMSHLRGTLTAFLKTIFGAEIKIRFRPSFFPFTEPSAEMDISCHPCNNTGYVKNEICRICKGSGWIEILGCGMVHPKVFESVGYDHNIYSGFAFGLGVERIAMLKYHIEDLRIFFENDLRFLRQFM.

A Mg(2+)-binding site is contributed by E253.

The protein belongs to the class-II aminoacyl-tRNA synthetase family. Phe-tRNA synthetase alpha subunit type 1 subfamily. Tetramer of two alpha and two beta subunits. Mg(2+) serves as cofactor.

Its subcellular location is the cytoplasm. The catalysed reaction is tRNA(Phe) + L-phenylalanine + ATP = L-phenylalanyl-tRNA(Phe) + AMP + diphosphate + H(+). This Lawsonia intracellularis (strain PHE/MN1-00) protein is Phenylalanine--tRNA ligase alpha subunit.